The sequence spans 565 residues: Periplasmic trehalase (565 aa).

Positions 1 to 30 (MKSPAPSRPQKMALIPACIFLCFAALSVQA) are cleaved as a signal peptide. Substrate is bound by residues Arg152, 159-160 (WD), Asn196, 205-207 (RSQ), 277-279 (RPE), and Gly310. Residues Asp312 and Glu496 each act as proton donor/acceptor in the active site. Glu511 lines the substrate pocket. The tract at residues 538–565 (PCDNVPATRPTVKSATTQPSTKEAQPTP) is disordered. The span at 548–565 (TVKSATTQPSTKEAQPTP) shows a compositional bias: polar residues.

It belongs to the glycosyl hydrolase 37 family. In terms of assembly, monomer.

The protein resides in the periplasm. The enzyme catalyses alpha,alpha-trehalose + H2O = alpha-D-glucose + beta-D-glucose. In terms of biological role, provides the cells with the ability to utilize trehalose at high osmolarity by splitting it into glucose molecules that can subsequently be taken up by the phosphotransferase-mediated uptake system. In Escherichia coli (strain 55989 / EAEC), this protein is Periplasmic trehalase.